The sequence spans 341 residues: 5-formaminoimidazole-4-carboxamide-1-(beta)-D-ribofuranosyl 5'-monophosphate synthetase (341 aa).

Residues His10 and Thr77 each coordinate 5-amino-1-(5-phospho-beta-D-ribosyl)imidazole-4-carboxamide. Residues 106 to 317 (DREMKEKLMR…YYNLLFNETM (212 aa)) form the ATP-grasp domain. Residues 132–188 (EKLS…VLAY) and Glu210 contribute to the ATP site. Residue Asn238 participates in 5-amino-1-(5-phospho-beta-D-ribosyl)imidazole-4-carboxamide binding. Glu277 and Glu290 together coordinate Mg(2+).

This sequence belongs to the phosphohexose mutase family. Requires Mg(2+) as cofactor. The cofactor is Mn(2+).

The enzyme catalyses 5-amino-1-(5-phospho-beta-D-ribosyl)imidazole-4-carboxamide + formate + ATP = 5-formamido-1-(5-phospho-D-ribosyl)imidazole-4-carboxamide + ADP + phosphate. Its pathway is purine metabolism; IMP biosynthesis via de novo pathway; 5-formamido-1-(5-phospho-D-ribosyl)imidazole-4-carboxamide from 5-amino-1-(5-phospho-D-ribosyl)imidazole-4-carboxamide (formate route): step 1/1. Catalyzes the ATP- and formate-dependent formylation of 5-aminoimidazole-4-carboxamide-1-beta-d-ribofuranosyl 5'-monophosphate (AICAR) to 5-formaminoimidazole-4-carboxamide-1-beta-d-ribofuranosyl 5'-monophosphate (FAICAR) in the absence of folates. In Nitrosopumilus maritimus (strain SCM1), this protein is 5-formaminoimidazole-4-carboxamide-1-(beta)-D-ribofuranosyl 5'-monophosphate synthetase.